A 1285-amino-acid chain; its full sequence is MARSDGFSPRKSLRRSAREHSRSYVGQGSNDDFDDMYSPPSRRRGSGGGDGNGYTRSGRKIHHSRYYEEDYQDAISSDDERMYRPRRNSNSLTYRQQCKQAIDESKRIQKVPPAKRKRIYMSDDEEEFVETRQMENTAPDRPTRRSSRRMSSTHEEPDVLDQEDVSPIRRTRRTTIRFGSEPVEENMEVPRVLETNDMANEAIVQAVDNTENGETEEDVIEKIGREEEEEGDEEEAESGEKEQVGLLFHRIFNQAYLQEDEESSNAESSEESTAPRQYSLRRRQPVVQFNQSEARENRRARLEHHRAANANRHHRNRNTSNRRRRSGSDSDSDDMVLPRPDKRQSRPHMHNRGERERGRFMPINMTEKELQSAQHILMDRMRKTDAGQGASDIDPMSVDSSVGFDQVGGLSHHIQSLKEVVLFPMLYPEVFAKFKINPPKGVVFYGPPGTGKTLVARALANECRRGANKVAFFMRKGADCLSKWVGESERQLRLLFDQAYAMRPSIIFFDEIDGLAPVRSSKQDQIHASIVSTLLALMDGLDGRGEVVVIGATNRLDSLDPALRRPGRFDRELRFSLPDLNARRHILDIHTSKWEENKPTPETLDGIAEKTSGYCGADLKFLCTESVLIGLRSRYPHIYMCSERLKLDITTIKITEEHFGHAMRRITPASRRDLTIPSRPLDERTSILLGDIVKNLISLRIPQGYRCVENAMATASTELEQVVRALEPNLTVPAIRLLLCGSPSLSDGGQTSYVLPAILAKLDHLPVFSLSVSSLLTDGRPEEAFSNAVQSAMRASATGPCIMLLPSIDEWIKVIPVSVQHMLITCLESMTGFTPILFLSTLDSSFEDAPEYATEVFRHANCISLNPSRRSVRKRYFEFVIDGVRRKPKVFDPTIYEMPQADDDSPEAKPSRKLNDDETRELLKMYTALQRQMRMFFKERLSRLIRDRRFVEFVEPVDPEEAEDYYEIIETPICMQDIMEKLNKCEYNHADKFIADLVLIQSNALEYNPSNTKDGKLIRQMANTFRDAIDDMIDCELDESFVERIEMVSRMLQDAGVTPTSDQLLTEIPKGFSRKKPWTMANTLAKEIEQWKAEREAENEKLKEKLGISTDTAQSAIEENKSEEGTSSSVEEIKKKLNKKKKDQKRNKKASSQDPDGDDTEETEEAVAENNVDADVEMKETPADPVPTIQSSSSQEREIIVSADSITDLIKLCVEKSEGWSVSELERLSSVLSHTIERFRDEWNRENLPEQLAQIVREWEATDATNEKIANGKASNKNGIVFNGY.

Disordered stretches follow at residues 1 to 95, 121 to 173, 224 to 243, and 258 to 359; these read MARS…LTYR, MSDD…RTRR, GREEEEEGDEEEAESGEKEQ, and QEDE…ERGR. Composition is skewed to acidic residues over residues 226–237 and 258–270; these read EEEEEGDEEEAE and QEDEESSNAESSE. The segment covering 311 to 325 has biased composition (basic residues); it reads NRHHRNRNTSNRRRR. 446 to 453 contributes to the ATP binding site; sequence GPPGTGKT. Residues 928 to 1032 form the Bromo domain; it reads ALQRQMRMFF…NTFRDAIDDM (105 aa). Positions 1100–1196 are disordered; the sequence is EKLKEKLGIS…PTIQSSSSQE (97 aa). Basic residues predominate over residues 1136–1149; sequence KLNKKKKDQKRNKK. A compositionally biased stretch (acidic residues) spans 1155–1175; it reads PDGDDTEETEEAVAENNVDAD.

The protein belongs to the AAA ATPase family.

In terms of biological role, thought to form a complex that enhances transcription from repetitive DNA sequences by modulating chromatin structure. This Caenorhabditis briggsae protein is Tat-binding homolog 7.